Reading from the N-terminus, the 549-residue chain is Dihydroxy-acid dehydratase (549 aa).

Residue Asp78 participates in Mg(2+) binding. Cys119 is a [2Fe-2S] cluster binding site. Positions 120 and 121 each coordinate Mg(2+). Lys121 carries the N6-carboxylysine modification. Residue Cys191 participates in [2Fe-2S] cluster binding. Mg(2+) is bound at residue Glu441. The Proton acceptor role is filled by Ser466.

The protein belongs to the IlvD/Edd family. As to quaternary structure, homodimer. [2Fe-2S] cluster is required as a cofactor. Mg(2+) serves as cofactor.

The enzyme catalyses (2R)-2,3-dihydroxy-3-methylbutanoate = 3-methyl-2-oxobutanoate + H2O. It carries out the reaction (2R,3R)-2,3-dihydroxy-3-methylpentanoate = (S)-3-methyl-2-oxopentanoate + H2O. Its pathway is amino-acid biosynthesis; L-isoleucine biosynthesis; L-isoleucine from 2-oxobutanoate: step 3/4. The protein operates within amino-acid biosynthesis; L-valine biosynthesis; L-valine from pyruvate: step 3/4. Functionally, functions in the biosynthesis of branched-chain amino acids. Catalyzes the dehydration of (2R,3R)-2,3-dihydroxy-3-methylpentanoate (2,3-dihydroxy-3-methylvalerate) into 2-oxo-3-methylpentanoate (2-oxo-3-methylvalerate) and of (2R)-2,3-dihydroxy-3-methylbutanoate (2,3-dihydroxyisovalerate) into 2-oxo-3-methylbutanoate (2-oxoisovalerate), the penultimate precursor to L-isoleucine and L-valine, respectively. The protein is Dihydroxy-acid dehydratase of Methanosphaera stadtmanae (strain ATCC 43021 / DSM 3091 / JCM 11832 / MCB-3).